The primary structure comprises 296 residues: Prostate androgen-regulated mucin-like protein 1 homolog (296 aa).

A signal peptide spans 1–20 (MVCKALITLCIFAAGLRVQG). Residues 21–244 (SPTPTLLPVS…EVENALSSGS (224 aa)) lie on the Extracellular side of the membrane. N-linked (GlcNAc...) asparagine glycans are attached at residues N62, N96, and N108. Residues 73–220 (LTSQLPTHPR…SPQDTEPGKV (148 aa)) form a disordered region. A compositionally biased stretch (basic and acidic residues) spans 80-96 (HPREEAVTSPPLKREVN). A compositionally biased stretch (low complexity) spans 97 to 111 (STDSSPTGFSSNSSG). The span at 125–145 (SPETSVPATGSQSPTLLFSQG) shows a compositional bias: polar residues. Low complexity-rich tracts occupy residues 146 to 175 (PTSA…TVNN) and 195 to 205 (SHTPTSHVTEP). N168 carries an N-linked (GlcNAc...) asparagine glycan. Positions 206–217 (VPKEKSPQDTEP) are enriched in basic and acidic residues. A helical transmembrane segment spans residues 245-265 (IAAITVTVIAVVLLVFGAAAY). Residues 266 to 296 (LKIRHSSYGRLLDDHDYGSWGNYNNPLYDDS) lie on the Cytoplasmic side of the membrane. S284 bears the Phosphoserine mark.

The protein belongs to the PARM family. In terms of processing, highly N-glycosylated and O-glycosylated. In terms of tissue distribution, expressed in prostate. Detected in other organs at low levels, these include the heart and various tissues of the urogenital tract. Not detected in mammary gland.

Its subcellular location is the cell membrane. The protein resides in the golgi apparatus membrane. The protein localises to the endosome membrane. Its function is as follows. May regulate TLP1 expression and telomerase activity, thus enabling certain prostatic cells to resist apoptosis. The sequence is that of Prostate androgen-regulated mucin-like protein 1 homolog (Parm1) from Rattus norvegicus (Rat).